The primary structure comprises 189 residues: Chitin synthase 1 (189 aa).

This sequence belongs to the chitin synthase family.

It localises to the cell membrane. The enzyme catalyses [(1-&gt;4)-N-acetyl-beta-D-glucosaminyl](n) + UDP-N-acetyl-alpha-D-glucosamine = [(1-&gt;4)-N-acetyl-beta-D-glucosaminyl](n+1) + UDP + H(+). Functionally, polymerizes chitin, a structural polymer of the cell wall and septum, by transferring the sugar moiety of UDP-GlcNAc to the non-reducing end of the growing chitin polymer. In Xylohypha bantiana, this protein is Chitin synthase 1 (CHS1).